Reading from the N-terminus, the 997-residue chain is LPS-assembly protein LptD (997 aa).

Positions 1-27 are cleaved as a signal peptide; sequence MLYSPLYQSIRLILFGALGLSSLTVSA.

Belongs to the LptD family. Component of the lipopolysaccharide transport and assembly complex. Interacts with LptE and LptA.

The protein resides in the cell outer membrane. In terms of biological role, together with LptE, is involved in the assembly of lipopolysaccharide (LPS) at the surface of the outer membrane. In Psychrobacter cryohalolentis (strain ATCC BAA-1226 / DSM 17306 / VKM B-2378 / K5), this protein is LPS-assembly protein LptD.